The following is a 279-amino-acid chain: Thymidylate synthase (279 aa).

132–133 (RR) contacts dUMP. The Nucleophile role is filled by Cys153. DUMP contacts are provided by residues 178–181 (RSND), Asn189, and 219–221 (HIY). Residue Asp181 participates in (6R)-5,10-methylene-5,6,7,8-tetrahydrofolate binding. Ala278 is a (6R)-5,10-methylene-5,6,7,8-tetrahydrofolate binding site.

This sequence belongs to the thymidylate synthase family. Bacterial-type ThyA subfamily. In terms of assembly, homodimer.

Its subcellular location is the cytoplasm. The enzyme catalyses dUMP + (6R)-5,10-methylene-5,6,7,8-tetrahydrofolate = 7,8-dihydrofolate + dTMP. It functions in the pathway pyrimidine metabolism; dTTP biosynthesis. Catalyzes the reductive methylation of 2'-deoxyuridine-5'-monophosphate (dUMP) to 2'-deoxythymidine-5'-monophosphate (dTMP) while utilizing 5,10-methylenetetrahydrofolate (mTHF) as the methyl donor and reductant in the reaction, yielding dihydrofolate (DHF) as a by-product. This enzymatic reaction provides an intracellular de novo source of dTMP, an essential precursor for DNA biosynthesis. The polypeptide is Thymidylate synthase (Lactococcus lactis subsp. cremoris (strain SK11)).